Consider the following 221-residue polypeptide: MDSNVITSLTFKTSKGRTSPKFGYGTSDSVEFVLESKGCAIVGFYGWYKTGSGYTTALGAYYYPMPLPPSSEKLEAQGGAGGAPWDDGSNFEGVRKIYIGTGEIGIVSIKFLYENDIHEIIVGDHHGNKNLLRHEEFDLDYPSEYLTSVEGSYDVVPGSEEDEVMIMLKFTTNMRTSPCYGLDDDPSFVLHKEGHKIVGFHGKSSTMLHKLGIHVLPITHS.

Jacalin-type lectin domains lie at 1–64 and 71–217; these read MDSN…YYYP and SEKL…HVLP.

Belongs to the jacalin lectin family.

The sequence is that of Jacalin-related lectin 47 (JAL47) from Arabidopsis thaliana (Mouse-ear cress).